The chain runs to 515 residues: Elongation factor 1-alpha S (515 aa).

Positions 5 to 258 (KTHINLVVIG…DAMKPPKRPT (254 aa)) constitute a tr-type G domain. The interval 14-21 (GHVDAGKS) is G1. 14–21 (GHVDAGKS) serves as a coordination point for GTP. At lysine 55 the chain carries N6,N6-dimethyllysine. The interval 70–74 (GITID) is G2. Lysine 79 is subject to N6,N6,N6-trimethyllysine. The G3 stretch occupies residues 91–94 (DAPG). GTP is bound by residues 91–95 (DAPGH) and 151–154 (NKMD). The segment at 151–154 (NKMD) is G4. Positions 187–206 (KKDKGDKKKGDKKEKKDKKD) are disordered. Residues 189–206 (DKGDKKKGDKKEKKDKKD) show a composition bias toward basic and acidic residues. Residues 222–224 (SGW) are G5. Residue lysine 289 is modified to N6-methyllysine. Lysine 334 is subject to N6,N6,N6-trimethyllysine. Residues 396–419 (KRGKQTHDVSDDTEWATKDDAEPR) form a disordered region. Residues 398 to 419 (GKQTHDVSDDTEWATKDDAEPR) show a composition bias toward basic and acidic residues. At lysine 441 the chain carries N6,N6,N6-trimethyllysine.

The protein belongs to the TRAFAC class translation factor GTPase superfamily. Classic translation factor GTPase family. EF-Tu/EF-1A subfamily.

Its subcellular location is the cytoplasm. In terms of biological role, this protein promotes the GTP-dependent binding of aminoacyl-tRNA to the A-site of ribosomes during protein biosynthesis. The chain is Elongation factor 1-alpha S (TEF-S) from Porphyra purpurea (Red seaweed).